The chain runs to 77 residues: Teretoxin Tan15.2 (77 aa).

Residues 1 to 21 form the signal peptide; it reads MTRLTVVFLAILVLLPLATSN. Positions 22–40 are excised as a propeptide; sequence SGADEAPASLSDLLHRTKR.

Contains 4 disulfide bonds. As to expression, expressed by the venom duct.

Its subcellular location is the secreted. This is Teretoxin Tan15.2 from Terebra anilis (Auger snail).